The primary structure comprises 430 residues: Serine--tRNA ligase (430 aa).

237-239 provides a ligand contact to L-serine; it reads TAE. 268–270 lines the ATP pocket; that stretch reads RSE. Residue Glu291 coordinates L-serine. An ATP-binding site is contributed by 355–358; the sequence is EISS. An L-serine-binding site is contributed by Ser391.

Belongs to the class-II aminoacyl-tRNA synthetase family. Type-1 seryl-tRNA synthetase subfamily. In terms of assembly, homodimer. The tRNA molecule binds across the dimer.

It is found in the cytoplasm. It carries out the reaction tRNA(Ser) + L-serine + ATP = L-seryl-tRNA(Ser) + AMP + diphosphate + H(+). The catalysed reaction is tRNA(Sec) + L-serine + ATP = L-seryl-tRNA(Sec) + AMP + diphosphate + H(+). Its pathway is aminoacyl-tRNA biosynthesis; selenocysteinyl-tRNA(Sec) biosynthesis; L-seryl-tRNA(Sec) from L-serine and tRNA(Sec): step 1/1. In terms of biological role, catalyzes the attachment of serine to tRNA(Ser). Is also able to aminoacylate tRNA(Sec) with serine, to form the misacylated tRNA L-seryl-tRNA(Sec), which will be further converted into selenocysteinyl-tRNA(Sec). In Escherichia coli O139:H28 (strain E24377A / ETEC), this protein is Serine--tRNA ligase.